A 315-amino-acid chain; its full sequence is MPPKPAPGDNEGNASGSTPTPPPPPPARTAEEARLRLAEMEREREQEQLLEEMNSNTPAEDARNISRLTQLAALLRREQTNVHVTNMALEIGRPALQPPPNMRGDPTNMYSQVSSDFLWKIKPQRISNNMATSEDMVKIQVALEGLGVPTESVKEVIIRLVLNCANTSSSVYQDPKGVIEWDGGAIIADDVVGVITKHSTLRKVCRLYAAVAWNYMHLQQTPPSDWSAMGFHPNVKYAAFDFFDYVENGAAIRPSGGIVPKPTRAEYVAYNTYKMLALNKANNNDTFGNFDSAITGGRQGPAIHNNLNNANNKTL.

The interval 1–60 (MPPKPAPGDNEGNASGSTPTPPPPPPARTAEEARLRLAEMEREREQEQLLEEMNSNTPAE) is disordered. The segment covering 29–47 (TAEEARLRLAEMEREREQE) has biased composition (basic and acidic residues).

Belongs to the potexviruses coat protein family.

The protein localises to the virion. Its function is as follows. Required for genome encapsidation. Forms ribonucleoprotein complexes along with TGB1 helicase and viral RNA. In Chrysanthemum morifolium (Florist's daisy), this protein is Capsid protein.